The sequence spans 874 residues: Alanine--tRNA ligase (874 aa).

The Zn(2+) site is built by His562, His566, Cys665, and His669.

Belongs to the class-II aminoacyl-tRNA synthetase family. The cofactor is Zn(2+).

It localises to the cytoplasm. It carries out the reaction tRNA(Ala) + L-alanine + ATP = L-alanyl-tRNA(Ala) + AMP + diphosphate. Catalyzes the attachment of alanine to tRNA(Ala) in a two-step reaction: alanine is first activated by ATP to form Ala-AMP and then transferred to the acceptor end of tRNA(Ala). Also edits incorrectly charged Ser-tRNA(Ala) and Gly-tRNA(Ala) via its editing domain. The chain is Alanine--tRNA ligase from Pseudomonas savastanoi pv. phaseolicola (strain 1448A / Race 6) (Pseudomonas syringae pv. phaseolicola (strain 1448A / Race 6)).